The sequence spans 245 residues: MMSTHPKPSYRRILLKLSGEALMGDEPFGIDAKVLDRMAQEIKELVELGVQVGLVIGGGNLFRGEGLAKAGMNRVVGDHMGMLATVMNGLAMRDALHRAFVNARLMSAIELTGVCDSYNWAEAISLLKSGRVVIFSAGTGNPFFTTDSAACLRGIEIEAEVVLKGTKVDGVYSDDPVSNPDATLYKHINYDDILEKQLKVMDLAAFTLARDHALPIRVFNMNKPGALRAVIMGEEEGTLISKNAE.

Lys16 to Gly19 is an ATP binding site. Gly58 is a UMP binding site. Gly59 and Arg63 together coordinate ATP. Residues Asp78 and Thr139–Thr146 contribute to the UMP site. 3 residues coordinate ATP: Thr166, Tyr172, and Asp175.

It belongs to the UMP kinase family. In terms of assembly, homohexamer.

The protein resides in the cytoplasm. It catalyses the reaction UMP + ATP = UDP + ADP. It functions in the pathway pyrimidine metabolism; CTP biosynthesis via de novo pathway; UDP from UMP (UMPK route): step 1/1. Its activity is regulated as follows. Inhibited by UTP. Functionally, catalyzes the reversible phosphorylation of UMP to UDP. The protein is Uridylate kinase of Idiomarina loihiensis (strain ATCC BAA-735 / DSM 15497 / L2-TR).